A 131-amino-acid chain; its full sequence is Probable histone H2A.3 (131 aa).

A disordered region spans residues 1-23; that stretch reads MAGRGKQLGSGAAKKSTSRSSKA. A compositionally biased stretch (low complexity) spans 9-23; it reads GSGAAKKSTSRSSKA.

Belongs to the histone H2A family. As to quaternary structure, the nucleosome is a histone octamer containing two molecules each of H2A, H2B, H3 and H4 assembled in one H3-H4 heterotetramer and two H2A-H2B heterodimers. The octamer wraps approximately 147 bp of DNA. Post-translationally, not ubiquitinated. In terms of tissue distribution, expressed in meristems and dividing cells.

The protein resides in the nucleus. The protein localises to the chromosome. Core component of nucleosome. Nucleosomes wrap and compact DNA into chromatin, limiting DNA accessibility to the cellular machineries which require DNA as a template. Histones thereby play a central role in transcription regulation, DNA repair, DNA replication and chromosomal stability. DNA accessibility is regulated via a complex set of post-translational modifications of histones, also called histone code, and nucleosome remodeling. The polypeptide is Probable histone H2A.3 (Arabidopsis thaliana (Mouse-ear cress)).